Reading from the N-terminus, the 229-residue chain is Potassium/proton antiporter CemA (229 aa).

4 helical membrane passes run 7-27, 114-134, 154-174, and 189-209; these read FTPLLYLVSIVFLPWWLSLSF, IICFVILSGFSILGNEELVIL, ILLLTDLCIGFHSPHGWELMV, and IISGLVSTFPVILDTIFKYWI.

It belongs to the CemA family.

It localises to the plastid. The protein localises to the chloroplast inner membrane. The enzyme catalyses K(+)(in) + H(+)(out) = K(+)(out) + H(+)(in). Its function is as follows. Contributes to K(+)/H(+) antiport activity by supporting proton efflux to control proton extrusion and homeostasis in chloroplasts in a light-dependent manner to modulate photosynthesis. Prevents excessive induction of non-photochemical quenching (NPQ) under continuous-light conditions. Indirectly promotes efficient inorganic carbon uptake into chloroplasts. The sequence is that of Potassium/proton antiporter CemA from Coffea arabica (Arabian coffee).